Reading from the N-terminus, the 411-residue chain is Tyrosine--tRNA ligase (411 aa).

Tyr-34 is an L-tyrosine binding site. Positions 39-48 (CTATSLHIGS) match the 'HIGH' region motif. Positions 171 and 175 each coordinate L-tyrosine. Positions 231 to 235 (KMGKT) match the 'KMSKS' region motif. Residue Lys-234 coordinates ATP. The 67-residue stretch at 345–411 (ISAYELFHEA…GKKRHILVRV (67 aa)) folds into the S4 RNA-binding domain.

The protein belongs to the class-I aminoacyl-tRNA synthetase family. TyrS type 1 subfamily. In terms of assembly, homodimer.

Its subcellular location is the cytoplasm. The enzyme catalyses tRNA(Tyr) + L-tyrosine + ATP = L-tyrosyl-tRNA(Tyr) + AMP + diphosphate + H(+). In terms of biological role, catalyzes the attachment of tyrosine to tRNA(Tyr) in a two-step reaction: tyrosine is first activated by ATP to form Tyr-AMP and then transferred to the acceptor end of tRNA(Tyr). This Rickettsia felis (strain ATCC VR-1525 / URRWXCal2) (Rickettsia azadi) protein is Tyrosine--tRNA ligase.